A 249-amino-acid polypeptide reads, in one-letter code: NAD(P)H-quinone oxidoreductase subunit T, chloroplastic (249 aa).

Residues 1-45 (MAYATSTYARTSCIILPKIQNGAHFTDDTKAFRRITARRVTRIYA) constitute a chloroplast transit peptide. The tract at residues 44–84 (YASQGPTKPSKPSPGVDTRIHWESPDEGWIGGRSDPAKSVD) is disordered. The region spanning 106–172 (SHYQFLGVST…ETRRFYDWTL (67 aa)) is the J domain. The helical transmembrane segment at 224-244 (LTFDILIVLFAVCCIAFVIVF) threads the bilayer.

Part of the chloroplast NDH complex, composed of a mixture of chloroplast and nucleus encoded subunits. Component of the electron donor-binding subcomplex, at least composed of NDHS, NDHT and NDHU.

It localises to the plastid. The protein localises to the chloroplast thylakoid membrane. The catalysed reaction is a plastoquinone + NADH + (n+1) H(+)(in) = a plastoquinol + NAD(+) + n H(+)(out). The enzyme catalyses a plastoquinone + NADPH + (n+1) H(+)(in) = a plastoquinol + NADP(+) + n H(+)(out). In terms of biological role, NDH shuttles electrons from NAD(P)H:plastoquinone, via FMN and iron-sulfur (Fe-S) centers, to quinones in the photosynthetic chain and possibly in a chloroplast respiratory chain. The immediate electron acceptor for the enzyme in this species is believed to be plastoquinone. Couples the redox reaction to proton translocation, and thus conserves the redox energy in a proton gradient. Required for the accumulation of both the NDH subcomplex A and NDHS. The sequence is that of NAD(P)H-quinone oxidoreductase subunit T, chloroplastic from Arabidopsis thaliana (Mouse-ear cress).